Here is a 185-residue protein sequence, read N- to C-terminus: CASP-like protein 5A1 (185 aa).

Over 1-45 (MNVSHPAVHPVGVPPALGGHAVPPRMRMRVRMEYLVFQGMPLPGT) the chain is Cytoplasmic. Residues 46–66 (LGGLVLRLGQFCSALIAFSVM) traverse the membrane as a helical segment. Residues 67–76 (LSVRDFSVTA) are Extracellular-facing. A helical transmembrane segment spans residues 77–97 (FCYLVAATVLQCLWSLAMAVI). Over 98-121 (DVYALLVKRSLRNPLLVSIFVVGD) the chain is Cytoplasmic. Residues 122–142 (GVTATLTFAAACASAGVIVLI) traverse the membrane as a helical segment. Residues 143–160 (GNDIAMCKDNPCANYEAA) are Extracellular-facing. A helical membrane pass occupies residues 161-181 (IIMAFLSWFMVSISFILTFWL). At 182 to 185 (LATL) the chain is on the cytoplasmic side.

The protein belongs to the Casparian strip membrane proteins (CASP) family. Homodimer and heterodimers.

It is found in the cell membrane. The polypeptide is CASP-like protein 5A1 (Picea sitchensis (Sitka spruce)).